We begin with the raw amino-acid sequence, 410 residues long: Single Ig IL-1-related receptor (410 aa).

Residues 1–118 are Extracellular-facing; it reads MPGVCDRAPD…TLQRAGPTSH (118 aa). One can recognise an Ig-like C2-type domain in the interval 9-109; that stretch reads PDFLSPSEDQ…IQNISFSSFT (101 aa). Asn31, Asn73, Asn86, and Asn102 each carry an N-linked (GlcNAc...) asparagine glycan. A disulfide bridge connects residues Cys32 and Cys98. The helical; Signal-anchor for type III membrane protein transmembrane segment at 119-139 threads the bilayer; sequence VAAVLASLLVLLALLLAALLY. The Cytoplasmic segment spans residues 140–410; that stretch reads VKCRLNVLLW…FYCLVSKDDM (271 aa). The TIR domain maps to 163-307; that stretch reads KLYDAYVSYS…DFWKEVQLAL (145 aa). The interval 340–390 is disordered; sequence EGRALDSEVDPDPEGDLGVRGPVFGEPSAPPHTSGVSLGESRSSEVDVSDL. Phosphoserine is present on Ser383.

Belongs to the interleukin-1 receptor family. As to quaternary structure, interacts with IL1R1, IRAK1, TLR4, TLR5, TLR9 and TRAF6. Upon IL-1 stimulation found in a complex at least composed of IL1R1, SIGIRR, MYD88, IRAK1 and TRAF6. Upon stimulation with LPC found in a complex at least composed of TLR4, SIG1IR, MYD88, IRAK1 and TRAF6. Interacts with PALM3. In terms of tissue distribution, mainly expressed in epithelial tissues such as kidney, lung and gut.

The protein resides in the membrane. Its function is as follows. Acts as a negative regulator of the Toll-like and IL-1R receptor signaling pathways. Attenuates the recruitment of receptor-proximal signaling components to the TLR4 receptor, probably through an TIR-TIR domain interaction with TLR4. Through its extracellular domain interferes with the heterodimerization of Il1R1 and IL1RAP. The protein is Single Ig IL-1-related receptor (SIGIRR) of Homo sapiens (Human).